A 268-amino-acid polypeptide reads, in one-letter code: Energy-coupling factor transporter transmembrane protein EcfT (268 aa).

The next 5 membrane-spanning stretches (helical) occupy residues 26–46 (IVTFVYIIVMLWASNWQTYAW), 72–92 (IFWLILFTVILQLLFTPGTPI), 106–126 (ILNAIYVMVRFVLIILMSTIL), 149–169 (IGVPVAELALMLAIALRFVPL), and 247–267 (VAFAALIGFVIIFFVIKTWLH).

The protein belongs to the energy-coupling factor EcfT family. Forms a stable energy-coupling factor (ECF) transporter complex composed of 2 membrane-embedded substrate-binding proteins (S component), 2 ATP-binding proteins (A component) and 2 transmembrane proteins (T component). May be able to interact with more than 1 S component at a time.

It is found in the cell membrane. Transmembrane (T) component of an energy-coupling factor (ECF) ABC-transporter complex. Unlike classic ABC transporters this ECF transporter provides the energy necessary to transport a number of different substrates. This is Energy-coupling factor transporter transmembrane protein EcfT from Leuconostoc gelidum subsp. gasicomitatum (strain DSM 15947 / CCUG 46042 / CECT 5767 / JCM 12535 / LMG 18811 / NBRC 113245 / TB1-10) (Leuconostoc gasicomitatum).